Reading from the N-terminus, the 449-residue chain is UMP-CMP kinase 2, mitochondrial (449 aa).

The N-terminal 98 residues, 1–98 (MAFARRLLRG…VRAARLHQRL (98 aa)), are a transit peptide targeting the mitochondrion. 259–266 (GLDATGKT) contacts ATP. Residues 380 to 412 (EERLQRLQGRGMEKTREEAELEANSVFRQKVEM) are a coiled coil.

The protein belongs to the thymidylate kinase family. As to expression, high levels are observed in myeloid, lymphoid and mesenchymal tissues.

The protein localises to the mitochondrion. The catalysed reaction is CMP + ATP = CDP + ADP. It catalyses the reaction dCMP + ATP = dCDP + ADP. The enzyme catalyses a 2'-deoxyribonucleoside 5'-diphosphate + ATP = a 2'-deoxyribonucleoside 5'-triphosphate + ADP. It carries out the reaction a ribonucleoside 5'-diphosphate + ATP = a ribonucleoside 5'-triphosphate + ADP. Mitochondrial nucleotide monophosphate kinase needed for salvage dNTP synthesis that mediates immunomodulatory and antiviral activities through IFN-dependent and IFN-independent pathways. Restricts the replication of multiple viruses including flaviviruses or coronaviruses. Together with viperin/RSAD2 and ddhCTP, suppresses the replication of several coronaviruses through inhibition of the viral RNA-dependent RNA polymerase activities. Concerning flaviviruses, restricts RNA translation when localized to the mitochondria independently of its kinase activity. Is able to phosphorylate dUMP, dCMP, CMP, UMP and monophosphates of the pyrimidine nucleoside analogs ddC, dFdC, araC, BVDU and FdUrd with ATP as phosphate donor. Efficacy is highest for dUMP followed by dCMP while CMP and UMP are poor substrates. Controls therefore mitochondrial DNA synthesis by supplying required deoxyribonucleotides. CMPK2-dependent mitochondrial DNA synthesis is necessary for the production of oxidized mitochondrial DNA fragments after exposure to NLRP3 activators. In turn, cytosolic oxidized mtDNA associates with the NLRP3 inflammasome complex and is required for its activation. The chain is UMP-CMP kinase 2, mitochondrial (CMPK2) from Homo sapiens (Human).